We begin with the raw amino-acid sequence, 194 residues long: Cytochrome c biogenesis ATP-binding export protein CcmA (194 aa).

The ABC transporter domain maps to 5 to 194; that stretch reads LALDGVACIR…LDELVMGVLA (190 aa). 37–44 lines the ATP pocket; sequence GPNGAGKS.

It belongs to the ABC transporter superfamily. CcmA exporter (TC 3.A.1.107) family. The complex is composed of two ATP-binding proteins (CcmA) and two transmembrane proteins (CcmB).

Its subcellular location is the cell inner membrane. The catalysed reaction is heme b(in) + ATP + H2O = heme b(out) + ADP + phosphate + H(+). Its function is as follows. Part of the ABC transporter complex CcmAB involved in the biogenesis of c-type cytochromes; once thought to export heme, this seems not to be the case, but its exact role is uncertain. Responsible for energy coupling to the transport system. This Sphingopyxis alaskensis (strain DSM 13593 / LMG 18877 / RB2256) (Sphingomonas alaskensis) protein is Cytochrome c biogenesis ATP-binding export protein CcmA.